A 511-amino-acid polypeptide reads, in one-letter code: Bifunctional purine biosynthesis protein PurH (511 aa).

An MGS-like domain is found at M1–S146.

Belongs to the PurH family.

The enzyme catalyses (6R)-10-formyltetrahydrofolate + 5-amino-1-(5-phospho-beta-D-ribosyl)imidazole-4-carboxamide = 5-formamido-1-(5-phospho-D-ribosyl)imidazole-4-carboxamide + (6S)-5,6,7,8-tetrahydrofolate. It carries out the reaction IMP + H2O = 5-formamido-1-(5-phospho-D-ribosyl)imidazole-4-carboxamide. It participates in purine metabolism; IMP biosynthesis via de novo pathway; 5-formamido-1-(5-phospho-D-ribosyl)imidazole-4-carboxamide from 5-amino-1-(5-phospho-D-ribosyl)imidazole-4-carboxamide (10-formyl THF route): step 1/1. It functions in the pathway purine metabolism; IMP biosynthesis via de novo pathway; IMP from 5-formamido-1-(5-phospho-D-ribosyl)imidazole-4-carboxamide: step 1/1. The sequence is that of Bifunctional purine biosynthesis protein PurH from Microcystis aeruginosa (strain NIES-843 / IAM M-2473).